We begin with the raw amino-acid sequence, 241 residues long: Lactate utilization protein C (241 aa).

It belongs to the LutC/YkgG family.

In terms of biological role, is involved in L-lactate degradation and allows cells to grow with lactate as the sole carbon source. This chain is Lactate utilization protein C, found in Bacillus velezensis (strain DSM 23117 / BGSC 10A6 / LMG 26770 / FZB42) (Bacillus amyloliquefaciens subsp. plantarum).